A 184-amino-acid polypeptide reads, in one-letter code: Protein PPLZ12 (184 aa).

This chain is Protein PPLZ12 (PPLZ12), found in Lupinus polyphyllus (Large-leaved lupine).